We begin with the raw amino-acid sequence, 288 residues long: 2-hydroxy-6-oxononadienedioate/2-hydroxy-6-oxononatrienedioate hydrolase (288 aa).

The region spanning 38–274 is the AB hydrolase-1 domain; it reads ALVLLHGSGP…RCGHWAQWEH (237 aa). His-268 (proton acceptor) is an active-site residue.

It belongs to the AB hydrolase superfamily. MhpC family. Homodimer.

The catalysed reaction is (2Z,4E)-2-hydroxy-6-oxonona-2,4-dienedioate + H2O = (2Z)-2-hydroxypenta-2,4-dienoate + succinate + H(+). It carries out the reaction (2Z,4E,7E)-2-hydroxy-6-oxonona-2,4,7-trienedioate + H2O = (2Z)-2-hydroxypenta-2,4-dienoate + fumarate + H(+). The protein operates within aromatic compound metabolism; 3-phenylpropanoate degradation. In terms of biological role, catalyzes the cleavage of the C5-C6 bond of 2-hydroxy-6-oxononadienedioate and 2-hydroxy-6-oxononatrienedioate, a dienol ring fission product of the bacterial meta-cleavage pathway for degradation of phenylpropionic acid. This chain is 2-hydroxy-6-oxononadienedioate/2-hydroxy-6-oxononatrienedioate hydrolase, found in Burkholderia vietnamiensis (strain G4 / LMG 22486) (Burkholderia cepacia (strain R1808)).